A 172-amino-acid polypeptide reads, in one-letter code: Translation initiation factor IF-3 (172 aa).

The protein belongs to the IF-3 family. In terms of assembly, monomer.

It localises to the cytoplasm. In terms of biological role, IF-3 binds to the 30S ribosomal subunit and shifts the equilibrium between 70S ribosomes and their 50S and 30S subunits in favor of the free subunits, thus enhancing the availability of 30S subunits on which protein synthesis initiation begins. This is Translation initiation factor IF-3 from Bartonella quintana (strain Toulouse) (Rochalimaea quintana).